Here is a 282-residue protein sequence, read N- to C-terminus: Putative peroxisomal biogenesis factor 19 (282 aa).

A disordered region spans residues 73–95; that stretch reads QEEAMKKAGADPSEGEGEQPLDP. Cys279 bears the Cysteine methyl ester mark. The S-farnesyl cysteine moiety is linked to residue Cys279. A propeptide spans 280-282 (removed in mature form); the sequence is SIM.

This sequence belongs to the peroxin-19 family.

It localises to the peroxisome. The polypeptide is Putative peroxisomal biogenesis factor 19 (prx-19) (Caenorhabditis elegans).